Consider the following 148-residue polypeptide: EKC/KEOPS complex subunit Lage3 (148 aa).

The disordered stretch occupies residues 1–21 (MQTAHTGLSHTADGADGQTSR).

This sequence belongs to the CTAG/PCC1 family. In terms of assembly, component of the EKC/KEOPS complex composed of at least GON7, TP53RK, TPRKB, OSGEP and LAGE3; the whole complex dimerizes.

The protein resides in the cytoplasm. Its subcellular location is the nucleus. Component of the EKC/KEOPS complex that is required for the formation of a threonylcarbamoyl group on adenosine at position 37 (t(6)A37) in tRNAs that read codons beginning with adenine. The complex is probably involved in the transfer of the threonylcarbamoyl moiety of threonylcarbamoyl-AMP (TC-AMP) to the N6 group of A37. LAGE3 functions as a dimerization module for the complex. This is EKC/KEOPS complex subunit Lage3 from Mus musculus (Mouse).